Here is a 256-residue protein sequence, read N- to C-terminus: Isoprenyl transferase (256 aa).

D33 is an active-site residue. D33 contacts Mg(2+). Substrate is bound by residues 34-37 (GNGR), W38, R46, H50, and 78-80 (STE). N81 serves as the catalytic Proton acceptor. Residues W82, R84, R201, and 207–209 (RIS) each bind substrate. E220 is a binding site for Mg(2+).

This sequence belongs to the UPP synthase family. In terms of assembly, homodimer. Mg(2+) is required as a cofactor.

Functionally, catalyzes the condensation of isopentenyl diphosphate (IPP) with allylic pyrophosphates generating different type of terpenoids. This is Isoprenyl transferase from Staphylococcus aureus (strain Mu50 / ATCC 700699).